Consider the following 427-residue polypeptide: Enolase (427 aa).

Residue glutamine 163 participates in (2R)-2-phosphoglycerate binding. Glutamate 205 serves as the catalytic Proton donor. Mg(2+) contacts are provided by aspartate 242, glutamate 285, and aspartate 312. (2R)-2-phosphoglycerate is bound by residues lysine 337, arginine 366, serine 367, and lysine 388. The active-site Proton acceptor is the lysine 337.

It belongs to the enolase family. Mg(2+) serves as cofactor.

The protein resides in the cytoplasm. It is found in the secreted. The protein localises to the cell surface. The enzyme catalyses (2R)-2-phosphoglycerate = phosphoenolpyruvate + H2O. The protein operates within carbohydrate degradation; glycolysis; pyruvate from D-glyceraldehyde 3-phosphate: step 4/5. In terms of biological role, catalyzes the reversible conversion of 2-phosphoglycerate (2-PG) into phosphoenolpyruvate (PEP). It is essential for the degradation of carbohydrates via glycolysis. This Nitrosospira multiformis (strain ATCC 25196 / NCIMB 11849 / C 71) protein is Enolase.